Here is a 557-residue protein sequence, read N- to C-terminus: Ribonuclease J 2 (557 aa).

Zn(2+)-binding residues include H76, H78, H144, and E166. 366-370 (HASSH) serves as a coordination point for substrate.

This sequence belongs to the metallo-beta-lactamase superfamily. RNA-metabolizing metallo-beta-lactamase-like family. Bacterial RNase J subfamily. As to quaternary structure, homodimer. Component of a possible RNA degradosome complex composed of cshA, eno, pfkA, pnp, rnjA, rnjB, rnpA and rny. Interacts specifically with RNase J1. Zn(2+) serves as cofactor.

The protein resides in the cytoplasm. An RNase that has 5'-3' exonuclease and endonuclease activity, with the exonuclease activity probably being most important in vivo. Involved in maturation of 16S rRNA, rnpB (the RNA component of RNase P) maturation and degradation, and mRNA maturation and/or decay. This subunit probably plays a structural rather than enzymatic role as mutation of its putative active site gives no phenotype, and its deletion is partially complemented by inactive RNase J1. This chain is Ribonuclease J 2, found in Staphylococcus aureus (strain NCTC 8325 / PS 47).